The sequence spans 282 residues: Acetylglutamate kinase (282 aa).

Residues 62–63 (GG), arginine 84, and asparagine 178 contribute to the substrate site.

The protein belongs to the acetylglutamate kinase family. ArgB subfamily.

It localises to the cytoplasm. It carries out the reaction N-acetyl-L-glutamate + ATP = N-acetyl-L-glutamyl 5-phosphate + ADP. It functions in the pathway amino-acid biosynthesis; L-arginine biosynthesis; N(2)-acetyl-L-ornithine from L-glutamate: step 2/4. Functionally, catalyzes the ATP-dependent phosphorylation of N-acetyl-L-glutamate. The sequence is that of Acetylglutamate kinase from Thermotoga petrophila (strain ATCC BAA-488 / DSM 13995 / JCM 10881 / RKU-1).